A 349-amino-acid chain; its full sequence is tRNA N6-adenosine threonylcarbamoyltransferase (349 aa).

Residues histidine 118 and histidine 122 each coordinate Fe cation. Substrate is bound by residues 141-145 (LVSGG), aspartate 174, glycine 187, and asparagine 280. Aspartate 308 is a Fe cation binding site.

This sequence belongs to the KAE1 / TsaD family. It depends on Fe(2+) as a cofactor.

It is found in the cytoplasm. The catalysed reaction is L-threonylcarbamoyladenylate + adenosine(37) in tRNA = N(6)-L-threonylcarbamoyladenosine(37) in tRNA + AMP + H(+). Required for the formation of a threonylcarbamoyl group on adenosine at position 37 (t(6)A37) in tRNAs that read codons beginning with adenine. Is involved in the transfer of the threonylcarbamoyl moiety of threonylcarbamoyl-AMP (TC-AMP) to the N6 group of A37, together with TsaE and TsaB. TsaD likely plays a direct catalytic role in this reaction. The polypeptide is tRNA N6-adenosine threonylcarbamoyltransferase (Acidovorax sp. (strain JS42)).